A 1325-amino-acid chain; its full sequence is Sperm-specific sodium:proton exchanger (1325 aa).

The N-terminal stretch at 1–29 is a signal peptide; the sequence is MKKRVVKLRELVPAVAALAVAVLIQSATG. Positions 28–68 are disordered; the sequence is TGSSGGSGHTPTTQATHADDHDLTTHNGTEEHDDGHDDGHD. The Extracellular portion of the chain corresponds to 30–76; it reads SSGGSGHTPTTQATHADDHDLTTHNGTEEHDDGHDDGHDDLHAHAPK. A compositionally biased stretch (basic and acidic residues) spans 44–68; sequence HADDHDLTTHNGTEEHDDGHDDGHD. His-73 serves as a coordination point for a 1,2-diacylglycero-3-phosphate. A helical transmembrane segment spans residues 77–96; the sequence is VIVFISGSCLFGAISRSLFK. Over 97–101 the chain is Cytoplasmic; the sequence is KLPIP. A helical transmembrane segment spans residues 102-119; the sequence is YTVVLLILGAILGVVASN. The Extracellular segment spans residues 120–135; the sequence is VPLVEEHTRDVAHMDP. The chain crosses the membrane as a helical span at residues 136 to 152; it reads HVLLQIFLPVLIFESAF. The Cytoplasmic portion of the chain corresponds to 153-162; the sequence is AMDVHTFMRS. The helical transmembrane segment at 163–188 threads the bilayer; the sequence is FSQVCILALFGLVVASVLTAVLAMNL. The segment at 163–250 is transport core domain; sequence FSQVCILALF…AIVIFNVFMK (88 aa). Residues 189-194 lie on the Extracellular side of the membrane; the sequence is FNYNWN. The chain crosses the membrane as a helical span at residues 195 to 220; sequence FSEAMMFGAIMSATDPVAVVALLKDL. Topologically, residues 221–223 are cytoplasmic; it reads GAS. The chain crosses the membrane as a helical span at residues 224-249; it reads KQLGTIIEGESLLNDGCAIVIFNVFM. The short motif at 237–238 is the Essential for sodium:proton exchange element; sequence ND. Over 250-260 the chain is Extracellular; it reads KMVFFPQLTST. The chain crosses the membrane as a helical span at residues 261-292; that stretch reads VGQNVLYFLQVAVAGPLWGYAVAKVTVFFLSH. The Cytoplasmic segment spans residues 293–296; the sequence is IFND. The chain crosses the membrane as a helical span at residues 297-319; the sequence is ALVEITITLAATYLTYYIGDIWL. Residues 320–322 are Extracellular-facing; the sequence is EVS. The chain crosses the membrane as a helical span at residues 323–336; sequence GVLAVVVLGLIVNA. Over 337–343 the chain is Cytoplasmic; the sequence is EKTSISP. A helical membrane pass occupies residues 344-377; that stretch reads EVEVFLHRFWEMLAYLANTLIFMMVGVVVTQKAL. Residues 378–382 are Extracellular-facing; the sequence is VAVDK. The chain crosses the membrane as a helical span at residues 383 to 412; it reads MDWFYLIILYLAITIIRGMVISLFSPILSR. A transport core domain region spans residues 383–481; it reads MDWFYLIILY…TTIQTLLRIL (99 aa). The Cytoplasmic portion of the chain corresponds to 413 to 418; sequence IGYGLT. Residues 419 to 446 traverse the membrane as a helical segment; the sequence is WRNAVIMTWGGLRGAVGLALALVVENLA. Over 447–450 the chain is Extracellular; that stretch reads GNDV. The chain crosses the membrane as a helical span at residues 451–481; the sequence is IGSKFLFHTAGIVVLTLVINATTIQTLLRIL. At 482–677 the chain is on the cytoplasmic side; sequence GMSDISIPKR…GKLMYKICHH (196 aa). Residues 575-620 form an interacts with the S4 segment of voltage sensor domain region; that stretch reads FADMMEEARLRMLKAEKISYWKQFEHGMLAREALRLLVQHAEVAAD. The segment at 605–620 is interacts with the transport core domain; can lock the transporter in the inward conformation; sequence REALRLLVQHAEVAAD. Residues 678-708 form a helical membrane-spanning segment; the sequence is MAFEVTINIAIVLNIVPIIMEFVVQDKMASV. Over 709–724 the chain is Extracellular; it reads STMAAPGSTVSSEPSS. Residues 725–752 traverse the membrane as a helical segment; that stretch reads LQKIEDALRISNYVFFVIYAIEAIVKIL. At 753–760 the chain is on the cytoplasmic side; sequence GLGRHYIV. A helical transmembrane segment spans residues 761–784; the sequence is SHWNKFDAFILVVALVDIIIAETL. The Extracellular segment spans residues 785–795; it reads LKGSITINLSS. The chain crosses the membrane as a helical span at residues 796–822; sequence IKVVKLFRLLRGLRMLRLTKALIPKLI. The segment at 796 to 857 is S4 segment of voltage sensor domain; it reads IKVVKLFRLL…EEVGKIIDRM (62 aa). The Cytoplasmic segment spans residues 823–1325; that stretch reads LVVNGKINNQ…EEGAAPRVNV (503 aa). An interacts with the S4 segment of voltage sensor domain region spans residues 860–919; it reads NKKILRELKHISETGRLQVVKELGLLQREHPGIAVSVKTRQAIRTILNHSRETIHELQGA. A cNMP-binding domain region spans residues 968 to 1068; sequence KLIDFIKARA…CETTVQVYFI (101 aa). Position 1043 (Gly-1043) interacts with 3',5'-cyclic AMP. The 3',5'-cyclic GMP site is built by Gly-1043, Glu-1044, and Met-1045. Residues Met-1045, Gly-1046, Arg-1053, and Asn-1054 each coordinate 3',5'-cyclic AMP. 3',5'-cyclic GMP contacts are provided by Arg-1053 and Asn-1054. Residues 1237 to 1325 are disordered; that stretch reads MLSRKSSGAA…EEGAAPRVNV (89 aa). Low complexity predominate over residues 1266–1280; the sequence is VSPSVPTKTTPKPKS.

The protein belongs to the monovalent cation:proton antiporter 1 (CPA1) transporter (TC 2.A.36) family. Homodimer; the dimerization is stabilized in the presence of phosphatidic acids.

The protein resides in the cell projection. It localises to the cilium. The protein localises to the flagellum membrane. It carries out the reaction Na(+)(in) + H(+)(out) = Na(+)(out) + H(+)(in). Gated by voltage and stimulated by cyclic nucleotides which shift the activation voltage closer to resting membrane potential. Not inhibited by common sodium:proton exchanger inhibitors such as amiloride. In terms of biological role, electroneutral sodium:proton antiporter that regulates intracellular pH of sperm along with capacitation and fertility. Activated in response to egg-derived chemoattractants, couples membrane voltage to sodium:proton exchange and transduces membrane hyperpolarization to cytoplasmic alkalization to cAMP signaling and ultimately to sperm motility. The sequence is that of Sperm-specific sodium:proton exchanger from Strongylocentrotus purpuratus (Purple sea urchin).